Consider the following 301-residue polypeptide: Acetylglutamate kinase (301 aa).

Residues glycine 72 to glycine 73, arginine 94, and asparagine 199 each bind substrate.

This sequence belongs to the acetylglutamate kinase family. ArgB subfamily.

It is found in the cytoplasm. The enzyme catalyses N-acetyl-L-glutamate + ATP = N-acetyl-L-glutamyl 5-phosphate + ADP. It participates in amino-acid biosynthesis; L-arginine biosynthesis; N(2)-acetyl-L-ornithine from L-glutamate: step 2/4. Catalyzes the ATP-dependent phosphorylation of N-acetyl-L-glutamate. This is Acetylglutamate kinase from Bartonella henselae (strain ATCC 49882 / DSM 28221 / CCUG 30454 / Houston 1) (Rochalimaea henselae).